A 403-amino-acid chain; its full sequence is Phosphoglycerate kinase (403 aa).

Substrate-binding positions include 21–23 (DFN), Arg36, 59–62 (HLGR), Arg119, and Arg154. ATP contacts are provided by residues Lys207, Gly299, Glu330, and 357 to 360 (GGDA).

This sequence belongs to the phosphoglycerate kinase family. In terms of assembly, monomer.

The protein localises to the cytoplasm. The enzyme catalyses (2R)-3-phosphoglycerate + ATP = (2R)-3-phospho-glyceroyl phosphate + ADP. The protein operates within carbohydrate degradation; glycolysis; pyruvate from D-glyceraldehyde 3-phosphate: step 2/5. The sequence is that of Phosphoglycerate kinase from Chlamydia felis (strain Fe/C-56) (Chlamydophila felis).